An 85-amino-acid polypeptide reads, in one-letter code: Putative plasmid stability protein y4jJ (85 aa).

A compositionally biased stretch (basic and acidic residues) spans 66-78; sequence EAEHFNQLRDKTP. The tract at residues 66 to 85 is disordered; the sequence is EAEHFNQLRDKTPAEPMSFE.

This sequence to P.syringae pv tomato plasmid stability protein StbC.

Functionally, involved in plasmid stability. This chain is Putative plasmid stability protein y4jJ, found in Sinorhizobium fredii (strain NBRC 101917 / NGR234).